Here is a 185-residue protein sequence, read N- to C-terminus: MGKVLVIYDTRTGNTKKMAELVAEGARSLEGTEVRLKHVDEATKEDVLWADGLAVGSPTNMGLVSWKMKRFFDDVLGDLWGEIDGKIACAFSSSGGWGGGNEVACMSILTMLMNFGFLVFGVTDYVGKKFTLHYGAVVAGEPRSEEEKEACRRLGRRLAEWVAIFVDGRKELLEKIRKDPARFVD.

Positions 4-159 constitute a Flavodoxin-like domain; that stretch reads VLVIYDTRTG…ACRRLGRRLA (156 aa).

The protein belongs to the flavodoxin family. FMN is required as a cofactor.

Functionally, low-potential electron donor to a number of redox enzymes. The protein is Flavodoxin (fldA) of Aquifex aeolicus (strain VF5).